A 213-amino-acid chain; its full sequence is GTP cyclohydrolase 1 (213 aa).

C104, H107, and C175 together coordinate Zn(2+).

The protein belongs to the GTP cyclohydrolase I family. Homomer.

It catalyses the reaction GTP + H2O = 7,8-dihydroneopterin 3'-triphosphate + formate + H(+). It participates in cofactor biosynthesis; 7,8-dihydroneopterin triphosphate biosynthesis; 7,8-dihydroneopterin triphosphate from GTP: step 1/1. This chain is GTP cyclohydrolase 1, found in Brucella canis (strain ATCC 23365 / NCTC 10854 / RM-666).